An 878-amino-acid chain; its full sequence is NUT family member 2B (878 aa).

6 disordered regions span residues 273–324 (WSQG…DDSC), 417–512 (QKSQ…PEEI), 527–560 (LLGPSLGATGEPEKQREEGKVKQPQEEDWTPPDP), 624–693 (PPLK…GMAR), 709–757 (LRAA…EEEE), and 775–878 (WLPQ…HCSQ). 2 stretches are compositionally biased toward pro residues: residues 278–288 (PLPPPPPPAAQ) and 427–444 (CLPPPATPRLEPRGPPAP). The span at 476-487 (TKARRPPPRPHR) shows a compositional bias: basic residues. The span at 537–551 (EPEKQREEGKVKQPQ) shows a compositional bias: basic and acidic residues.

The protein belongs to the NUT family.

This chain is NUT family member 2B (NUTM2B), found in Homo sapiens (Human).